Consider the following 146-residue polypeptide: Probable flagellum biosynthesis repressor protein FlbT 1 (146 aa).

The protein belongs to the FlbT family.

Functionally, has a post-transcriptional repressor function in flagellum biogenesis. Associates with the 5'-UTR of fljK mRNA and promotes its degradation. This Bradyrhizobium diazoefficiens (strain JCM 10833 / BCRC 13528 / IAM 13628 / NBRC 14792 / USDA 110) protein is Probable flagellum biosynthesis repressor protein FlbT 1.